The sequence spans 315 residues: Protein OPG185 (315 aa).

Residues 1-16 form the signal peptide; it reads MARLPILLLLISLVYS. One can recognise an Ig-like V-type domain in the interval 17–121; sequence TPSPQTSKKI…NDTDKVDYEE (105 aa). The Virion surface segment spans residues 17–279; the sequence is TPSPQTSKKI…SNYKTKDFVE (263 aa). A disulfide bond links cysteine 34 and cysteine 103. Residues asparagine 37, asparagine 69, asparagine 112, and asparagine 161 are each glycosylated (N-linked (GlcNAc...) asparagine; by host). Residues 192 to 202 are compositionally biased toward polar residues; it reads INTVSASSGES. Positions 192–214 are disordered; that stretch reads INTVSASSGESTTDETPEPITDK. Residue asparagine 254 is glycosylated (N-linked (GlcNAc...) asparagine; by host). A helical membrane pass occupies residues 280–303; sequence IFGITALIILSAVAIFCITYYIYN. Residues 304 to 315 are Intravirion-facing; it reads KRSRKYKTENKV.

This sequence belongs to the orthopoxvirus OPG185 family. Heterodimerizes with OPG040. The heterodimer OPG185-OPG040 interacts with components of the entry fusion complex OPG143 and OPG094. Heterodimer with C3/VPC protein; disulfide-linked. In terms of processing, glycosylated; contains phosphate and sulfate-substituted glycans. O-glycosylation is required for hemagglutination and hemadsorption activities of infected cell membranes.

The protein resides in the virion membrane. It localises to the host membrane. In terms of biological role, prevents cell to cell fusion by interacting with and directing the viral OPG040 protein on the host plasma membrane. The OPG185-OPG040 complex associates with components of the entry fusion complex (EFC) presumably to avoid superinfection and syncytium formation. Via its interaction with C3/VCP protein, protects the infected cell and probably also the extracellular enveloped virus from complement attack. The sequence is that of Protein OPG185 (OPG185) from Vaccinia virus (strain Tian Tan) (VACV).